The primary structure comprises 615 residues: RNA polymerase sigma factor RpoD (615 aa).

Residues Gly166–Pro216 form a disordered region. Over residues Asp194–Ser212 the composition is skewed to acidic residues. Residues Met381–Thr451 form a sigma-70 factor domain-2 region. Residues Asp405–Gln408 carry the Interaction with polymerase core subunit RpoC motif. The interval Glu460 to Val536 is sigma-70 factor domain-3. Residues Val549–His602 are sigma-70 factor domain-4. Residues Leu575–Ala594 constitute a DNA-binding region (H-T-H motif).

Belongs to the sigma-70 factor family. RpoD/SigA subfamily. As to quaternary structure, interacts transiently with the RNA polymerase catalytic core.

The protein localises to the cytoplasm. Sigma factors are initiation factors that promote the attachment of RNA polymerase to specific initiation sites and are then released. This sigma factor is the primary sigma factor during exponential growth. This Pseudomonas protegens (strain DSM 19095 / LMG 27888 / CFBP 6595 / CHA0) protein is RNA polymerase sigma factor RpoD.